We begin with the raw amino-acid sequence, 714 residues long: Stellatatriene synthase (714 aa).

The segment at Met1–Asp325 is stellata-2,6,19-trien synthase. Residues Asp92 and Asp96 each coordinate Mg(2+). A DDXXD motif 1 motif is present at residues Asp92 to Asp96. Residues Tyr276–Lys284 carry the NSE motif motif. The segment at His326 to Thr713 is geranylgeranyl diphosphate synthase. Residues Lys332–Ser356 are disordered. The span at Ser341–Ser356 shows a compositional bias: low complexity. Isopentenyl diphosphate contacts are provided by Lys434, Arg437, and His466. Positions 473 and 477 each coordinate Mg(2+). The DDXXD motif 2 motif lies at Asp473–Asp477. Arg482 serves as a coordination point for dimethylallyl diphosphate. Arg483 is an isopentenyl diphosphate binding site. Dimethylallyl diphosphate is bound by residues Lys560, Thr561, Gln596, Asn603, Lys613, and Lys623.

This sequence in the N-terminal section; belongs to the terpene synthase family. In the C-terminal section; belongs to the FPP/GGPP synthase family. In terms of assembly, hexamer.

The catalysed reaction is 4 isopentenyl diphosphate + dimethylallyl diphosphate = (2E,6E,10E,14E)-geranylfarnesyl diphosphate + 4 diphosphate. It carries out the reaction (2E,6E,10E,14E)-geranylfarnesyl diphosphate = stellata-2,6,19-triene + diphosphate. Its pathway is secondary metabolite biosynthesis; terpenoid biosynthesis. Functionally, multifunctional diterpene synthase; part of the gene cluster that mediates the biosynthesis of the sesterterpene stellatic acid. The first step in the pathway is performed by the stellatatriene synthase that possesses both prenyl transferase and terpene cyclase activity, converting isopentenyl diphosphate and dimethylallyl diphosphate into geranylgeranyl diphosphate (GGDP) and then converting GGDP into stellata-2,6,19-triene. The cytochrome P450 monooxygenase Stl-P450 then catalyzes three successive oxidation reactions on the C-20 methyl group to generate the carboxylic acid of stellatic acid. The protein is Stellatatriene synthase of Emericella variicolor (Aspergillus stellatus).